A 465-amino-acid polypeptide reads, in one-letter code: UPF0422 protein CBU_0937 (465 aa).

The signal sequence occupies residues 1 to 23 (MTSKLVISALGLCVSGALSTTLA). The stretch at 28-60 (TTNQQITKRIDYLQAQINELRTQQKKERQKKKA) forms a coiled coil.

It belongs to the UPF0422 family.

The sequence is that of UPF0422 protein CBU_0937 from Coxiella burnetii (strain RSA 493 / Nine Mile phase I).